A 118-amino-acid polypeptide reads, in one-letter code: Protein LH1 (118 aa).

The sequence is that of Protein LH1 from Snake adenovirus serotype 1 (SnAdV-1).